The chain runs to 277 residues: Putative thiosulfate sulfurtransferase (277 aa).

Rhodanese domains follow at residues 18–125 and 154–274; these read KAPK…PLSA and AIGT…APIE. Lys-67 participates in a covalent cross-link: Isoglutamyl lysine isopeptide (Lys-Gln) (interchain with Q-Cter in protein Pup). The Cysteine persulfide intermediate role is filled by Cys-233. Arg-238 provides a ligand contact to substrate.

It catalyses the reaction thiosulfate + hydrogen cyanide = thiocyanate + sulfite + 2 H(+). Its function is as follows. May be a sulfotransferase involved in the formation of thiosulfate. This is Putative thiosulfate sulfurtransferase from Mycolicibacterium smegmatis (strain ATCC 700084 / mc(2)155) (Mycobacterium smegmatis).